The chain runs to 196 residues: Imidazole glycerol phosphate synthase subunit HisH (196 aa).

Residues 2–196 (NVVILDTGCA…AKLLKNFLEM (195 aa)) form the Glutamine amidotransferase type-1 domain. Catalysis depends on Cys-77, which acts as the Nucleophile. Residues His-178 and Glu-180 contribute to the active site.

In terms of assembly, heterodimer of HisH and HisF.

It is found in the cytoplasm. It carries out the reaction 5-[(5-phospho-1-deoxy-D-ribulos-1-ylimino)methylamino]-1-(5-phospho-beta-D-ribosyl)imidazole-4-carboxamide + L-glutamine = D-erythro-1-(imidazol-4-yl)glycerol 3-phosphate + 5-amino-1-(5-phospho-beta-D-ribosyl)imidazole-4-carboxamide + L-glutamate + H(+). It catalyses the reaction L-glutamine + H2O = L-glutamate + NH4(+). Its pathway is amino-acid biosynthesis; L-histidine biosynthesis; L-histidine from 5-phospho-alpha-D-ribose 1-diphosphate: step 5/9. IGPS catalyzes the conversion of PRFAR and glutamine to IGP, AICAR and glutamate. The HisH subunit catalyzes the hydrolysis of glutamine to glutamate and ammonia as part of the synthesis of IGP and AICAR. The resulting ammonia molecule is channeled to the active site of HisF. The polypeptide is Imidazole glycerol phosphate synthase subunit HisH (Shigella dysenteriae serotype 1 (strain Sd197)).